Reading from the N-terminus, the 465-residue chain is Argininosuccinate lyase (465 aa).

This sequence belongs to the lyase 1 family. Argininosuccinate lyase subfamily.

Its subcellular location is the cytoplasm. The catalysed reaction is 2-(N(omega)-L-arginino)succinate = fumarate + L-arginine. Its pathway is amino-acid biosynthesis; L-arginine biosynthesis; L-arginine from L-ornithine and carbamoyl phosphate: step 3/3. The polypeptide is Argininosuccinate lyase (Aromatoleum aromaticum (strain DSM 19018 / LMG 30748 / EbN1) (Azoarcus sp. (strain EbN1))).